The primary structure comprises 413 residues: 4-hydroxy-3-methylbut-2-en-1-yl diphosphate synthase (flavodoxin) (413 aa).

4 residues coordinate [4Fe-4S] cluster: Cys-305, Cys-308, Cys-351, and Glu-358.

This sequence belongs to the IspG family. The cofactor is [4Fe-4S] cluster.

It carries out the reaction (2E)-4-hydroxy-3-methylbut-2-enyl diphosphate + oxidized [flavodoxin] + H2O + 2 H(+) = 2-C-methyl-D-erythritol 2,4-cyclic diphosphate + reduced [flavodoxin]. Its pathway is isoprenoid biosynthesis; isopentenyl diphosphate biosynthesis via DXP pathway; isopentenyl diphosphate from 1-deoxy-D-xylulose 5-phosphate: step 5/6. Converts 2C-methyl-D-erythritol 2,4-cyclodiphosphate (ME-2,4cPP) into 1-hydroxy-2-methyl-2-(E)-butenyl 4-diphosphate. The chain is 4-hydroxy-3-methylbut-2-en-1-yl diphosphate synthase (flavodoxin) from Bartonella tribocorum (strain CIP 105476 / IBS 506).